The primary structure comprises 156 residues: Snaclec A2 (156 aa).

The signal sequence occupies residues 1-23 (MGRLISVSFGLLVVFLSLSGTGA). Intrachain disulfides connect C27/C38, C55/C154, and C129/C146. The C-type lectin domain occupies 34-155 (HEGHCYKVFN…CGQPYRFTCE (122 aa)).

This sequence belongs to the snaclec family. Heterodimer; disulfide-linked. Expressed by the venom gland.

The protein localises to the secreted. In terms of biological role, interferes with one step of hemostasis (modulation of platelet aggregation, or coagulation cascade, for example). This Macrovipera lebetinus (Levantine viper) protein is Snaclec A2.